We begin with the raw amino-acid sequence, 325 residues long: Short chain isoprenyl diphosphate synthase (325 aa).

Residues lysine 44, arginine 47, and histidine 76 each coordinate isopentenyl diphosphate. Aspartate 83 and aspartate 87 together coordinate Mg(2+). An an all-trans-polyprenyl diphosphate-binding site is contributed by arginine 92. Arginine 93 provides a ligand contact to isopentenyl diphosphate. Positions 173, 174, 211, 228, and 238 each coordinate an all-trans-polyprenyl diphosphate.

The protein belongs to the FPP/GGPP synthase family. In terms of assembly, homodimer. Mg(2+) serves as cofactor.

The protein localises to the cytoplasm. This Methanothermobacter thermautotrophicus (strain ATCC 29096 / DSM 1053 / JCM 10044 / NBRC 100330 / Delta H) (Methanobacterium thermoautotrophicum) protein is Short chain isoprenyl diphosphate synthase (idsA).